The chain runs to 368 residues: (3S,6E)-nerolidol synthase (368 aa).

3 residues coordinate Mg(2+): D91, N228, and S232. The DDXXE motif motif lies at D91–E95.

Belongs to the terpene synthase family. Mg(2+) is required as a cofactor. The cofactor is Mn(2+).

It catalyses the reaction (2E,6E)-farnesyl diphosphate + H2O = (3S,6E)-nerolidol + diphosphate. It carries out the reaction (2E)-geranyl diphosphate + H2O = (S)-linalool + diphosphate. Its pathway is secondary metabolite biosynthesis; terpenoid biosynthesis. Its function is as follows. Sesquiterpene synthase converting farnesyl diphosphate to nerolidol. Also has a monoterpene synthase activity, converting geranyl diphosphate into linalool as the major product. Has no diterpene synthase activity. The protein is (3S,6E)-nerolidol synthase of Selaginella moellendorffii (Spikemoss).